A 171-amino-acid chain; its full sequence is Synaptonemal complex central element protein 2 (171 aa).

Residues 1–52 (MERHGVAAPPVELKDQEPPAIVESGEHRQSENHEETPGSVAPSASCQLPGPF) are disordered. Residues 24–36 (SGEHRQSENHEET) are compositionally biased toward basic and acidic residues. 2 coiled-coil regions span residues 52-83 (FSSL…DHAL) and 118-146 (QERL…QTVE).

The protein belongs to the SYCE family. As to quaternary structure, homodimer. Found in a complex with SYCP1 and SYCE1. Interacts with SYCP1 and SYCE1. Interacts with SYCE3. Interacts with TEX12. In terms of tissue distribution, meiotic cells (at protein level). Expressed in the ovary and testis.

The protein localises to the nucleus. It localises to the chromosome. Functionally, major component of the transverse central element of synaptonemal complexes (SCS), formed between homologous chromosomes during meiotic prophase. Requires SYCP1 in order to be incorporated into the central element. May have a role in the synaptonemal complex assembly, stabilization and recombination. In Mus musculus (Mouse), this protein is Synaptonemal complex central element protein 2 (Syce2).